The sequence spans 347 residues: Endophilin-A3 (347 aa).

The segment at 1 to 21 (MSVAGLKKQFHKASQLFSEKI) is membrane-binding amphipathic helix. The 232-residue stretch at 18–249 (SEKISGAEGT…LELRISLASK (232 aa)) folds into the BAR domain. A required for dimerization upon membrane association region spans residues 60–87 (PNPAYRAKLGMLNTVSKLRGQVKATGYP). The stretch at 180–201 (EEEIRQAVEKFEESKELAERSM) forms a coiled coil. Positions 218 to 254 (FVEAALDYHRQSTEILQELQSKLELRISLASKVPKRE) are interaction with ARC. Residues 255–288 (FMPKPVNMSSTDANGVGPSSSSKTPGTDTPADQP) are disordered. Residues 261–281 (NMSSTDANGVGPSSSSKTPGT) show a composition bias toward polar residues. The SH3 domain occupies 285–344 (ADQPCCRGLYDFEPENEGELGFKEGDIITLTNQIDENWYEGMLRGESGFFPINYVEVIVP).

This sequence belongs to the endophilin family. As to quaternary structure, interacts with ARC, DNM1, SGIP1, SYNJ1 and DYDC1. Interacts with FASLG. Interacts with ATXN2. Interacts with BIN2.

It localises to the cytoplasm. It is found in the early endosome membrane. Functionally, implicated in endocytosis. May recruit other proteins to membranes with high curvature. This Mus musculus (Mouse) protein is Endophilin-A3 (Sh3gl3).